Consider the following 297-residue polypeptide: UDP-N-acetylenolpyruvoylglucosamine reductase (297 aa).

The FAD-binding PCMH-type domain occupies 22–195; it reads RVGGPAQYYA…LAGRFRLHRA (174 aa). The active site involves Arg169. Ser223 functions as the Proton donor in the catalytic mechanism. Glu293 is an active-site residue.

Belongs to the MurB family. It depends on FAD as a cofactor.

It is found in the cytoplasm. It carries out the reaction UDP-N-acetyl-alpha-D-muramate + NADP(+) = UDP-N-acetyl-3-O-(1-carboxyvinyl)-alpha-D-glucosamine + NADPH + H(+). The protein operates within cell wall biogenesis; peptidoglycan biosynthesis. Cell wall formation. The protein is UDP-N-acetylenolpyruvoylglucosamine reductase of Chloroflexus aggregans (strain MD-66 / DSM 9485).